We begin with the raw amino-acid sequence, 602 residues long: Oligoendopeptidase F, chromosomal (602 aa).

His-388 lines the Zn(2+) pocket. Glu-389 is a catalytic residue. Zn(2+) is bound by residues His-392 and His-395.

This sequence belongs to the peptidase M3B family. Zn(2+) is required as a cofactor.

In terms of biological role, hydrolyzes peptides containing between 7 and 17 amino acids with a rather wide specificity. This Lactococcus lactis subsp. cremoris (Streptococcus cremoris) protein is Oligoendopeptidase F, chromosomal (pepF2).